The following is a 294-amino-acid chain: Putative cuticle collagen 145 (294 aa).

Positions 1–30 are cleaved as a signal peptide; that stretch reads MEKILVTFSTGAASIAVLAVLFTVPSLYNT. A compositionally biased stretch (pro residues) spans 100–112; the sequence is TCPPGPPGPPGQP. 2 disordered regions span residues 100–133 and 148–276; these read TCPP…ATFA and PQGP…LPGN. 2 triple-helical region regions span residues 102–127 and 148–277; these read PPGP…KGDD and PQGP…PGND. Composition is skewed to low complexity over residues 164–194 and 219–265; these read AGPD…NGQP and APGA…DGQP. A Collagen-like domain is found at 218 to 276; the sequence is GAPGAPGNAGPAGPAGQDGFPGQDGAPGPAGPAGQDGFPGNAGSDGQPGAPGGPGLPGN.

This sequence belongs to the cuticular collagen family. As to quaternary structure, collagen polypeptide chains are complexed within the cuticle by disulfide bonds and other types of covalent cross-links.

Functionally, nematode cuticles are composed largely of collagen-like proteins. The cuticle functions both as an exoskeleton and as a barrier to protect the worm from its environment. This is Putative cuticle collagen 145 (col-145) from Caenorhabditis elegans.